Consider the following 140-residue polypeptide: Large ribosomal subunit protein uL11 (140 aa).

Belongs to the universal ribosomal protein uL11 family. As to quaternary structure, part of the ribosomal stalk of the 50S ribosomal subunit. Interacts with L10 and the large rRNA to form the base of the stalk. L10 forms an elongated spine to which L12 dimers bind in a sequential fashion forming a multimeric L10(L12)X complex. In terms of processing, one or more lysine residues are methylated.

Forms part of the ribosomal stalk which helps the ribosome interact with GTP-bound translation factors. In Geobacter sp. (strain M21), this protein is Large ribosomal subunit protein uL11.